A 592-amino-acid chain; its full sequence is Sodium- and chloride-dependent transporter XTRP3A (592 aa).

Topologically, residues 1-7 (MEKARPQ) are cytoplasmic. Residues 8–28 (WGHPLQFVFACISYAVGLGNV) traverse the membrane as a helical segment. Residues 29-42 (WRFPYLCQMYGGGS) are Extracellular-facing. Residues 43 to 63 (FLVPYIIMLIVEGMPLLYLEL) form a helical membrane-spanning segment. The Cytoplasmic portion of the chain corresponds to 64-79 (AVGQRMRQGSIGAWRT). A helical transmembrane segment spans residues 80–100 (ISPYLSGVGVASVVVSFFLSM). Topologically, residues 101 to 165 (YYNVINAWGF…ISPSIQENGG (65 aa)) are extracellular. An N-linked (GlcNAc...) asparagine glycan is attached at N131. The helical transmembrane segment at 166-186 (VQWEPALCLTLAWLMVYLCIL) threads the bilayer. At 187–194 (RGTESTGK) the chain is on the cytoplasmic side. The helical transmembrane segment at 195–215 (VVYFTASMPYCVLIIYLVRGL) threads the bilayer. The Extracellular segment spans residues 216 to 241 (TLHGATNGLMYMFTPKMEQLANPKAW). Residues 242-262 (INAATQIFFSLGLGFGSLIAF) form a helical membrane-spanning segment. The Cytoplasmic portion of the chain corresponds to 263–276 (ASYNEPSNNCQKHA). The helical transmembrane segment at 277 to 297 (IIVSIINSSTSIFASIVTFSI) threads the bilayer. Over 298 to 389 (YGFKATFNYE…EAIKNMEVSQ (92 aa)) the chain is Extracellular. A helical transmembrane segment spans residues 390–410 (LWSVLYFFMLLMLGIGSMLGN). Residues 411–431 (TAAILTPLTDSKVISSYLPKE) are Cytoplasmic-facing. The chain crosses the membrane as a helical span at residues 432-452 (AISGLVCLINCAVGMVFTMEA). The Extracellular portion of the chain corresponds to 453–465 (GNYWFDIFNDYAA). A helical transmembrane segment spans residues 466–486 (TLSLLLIVLVETIAVCYVYGL). The Cytoplasmic segment spans residues 487–504 (KRFESDLRAMTGRTLSWY). A helical transmembrane segment spans residues 505-525 (WKVMWAFVSPLLIVGLFIFYL). The Extracellular segment spans residues 526 to 554 (SDYILTGTLQYQAWDATQGQLVTKDYPPH). A helical membrane pass occupies residues 555–575 (ALAVIGLLVASSTMCIPLVAL). Residues 576–592 (GTFIRNRLKRGGSAPVA) are Cytoplasmic-facing.

This sequence belongs to the sodium:neurotransmitter symporter (SNF) (TC 2.A.22) family. SLC6A20 subfamily. As to expression, expressed in brain, kidney, small intestine, thymus, spleen and lung. In the brain, expressed in cerebellum, cortex and brain stem. Not detected in liver, muscle or heart. In brain, widespread in various regions, including the meninges, choroid plexus, cortex, hippocampus and thalamus.

It localises to the apical cell membrane. The enzyme catalyses L-proline(out) + chloride(out) + 2 Na(+)(out) = L-proline(in) + chloride(in) + 2 Na(+)(in). It catalyses the reaction 4-hydroxy-L-proline(out) + chloride(out) + 2 Na(+)(out) = 4-hydroxy-L-proline(in) + chloride(in) + 2 Na(+)(in). It carries out the reaction 2-methyl-2-(methylamino)propanoate(out) + chloride(out) + 2 Na(+)(out) = 2-methyl-2-(methylamino)propanoate(in) + chloride(in) + 2 Na(+)(in). The catalysed reaction is L-pipecolate(out) + chloride(out) + 2 Na(+)(out) = L-pipecolate(in) + chloride(in) + 2 Na(+)(in). The enzyme catalyses glycine betaine(out) + chloride(out) + 2 Na(+)(out) = glycine betaine(in) + chloride(in) + 2 Na(+)(in). It catalyses the reaction glycine(out) + chloride(out) + 2 Na(+)(out) = glycine(in) + chloride(in) + 2 Na(+)(in). Functionally, mediates the Na(+)- and Cl(-)-dependent uptake of imino acids such as L-proline, N-methyl-L-proline and pipecolate as well as N-methylated amino acids. Also transports glycine, regulates proline and glycine homeostasis in the brain playing a role in the modulation of NMDAR currents. The sequence is that of Sodium- and chloride-dependent transporter XTRP3A from Mus musculus (Mouse).